A 591-amino-acid polypeptide reads, in one-letter code: Indole-3-acetic acid-amido synthetase GH3.10 (591 aa).

It belongs to the IAA-amido conjugating enzyme family. In terms of tissue distribution, expressed in cotyledons and hypocotyls.

In terms of biological role, catalyzes the synthesis of indole-3-acetic acid (IAA)-amino acid conjugates, providing a mechanism for the plant to cope with the presence of excess auxin. Involved in red light-specific hypocotyl elongation. May act downstream of a red light signal transduction and determine the degree of hypocotyl elongation. The sequence is that of Indole-3-acetic acid-amido synthetase GH3.10 from Arabidopsis thaliana (Mouse-ear cress).